Reading from the N-terminus, the 117-residue chain is Large ribosomal subunit protein bL19 (117 aa).

This sequence belongs to the bacterial ribosomal protein bL19 family.

In terms of biological role, this protein is located at the 30S-50S ribosomal subunit interface and may play a role in the structure and function of the aminoacyl-tRNA binding site. This is Large ribosomal subunit protein bL19 from Colwellia psychrerythraea (strain 34H / ATCC BAA-681) (Vibrio psychroerythus).